The following is a 417-amino-acid chain: Sulfite reductase, dissimilatory-type subunit alpha (417 aa).

[4Fe-4S] cluster is bound by residues C170, C176, C214, C218, C264, C284, C287, and C290. C218 is a siroheme binding site.

Requires [4Fe-4S] cluster as cofactor. The cofactor is siroheme.

The catalysed reaction is [DsrC protein]-trisulfide + NAD(+) + 3 H2O = [DsrC protein]-dithiol + sulfite + NADH + 3 H(+). In terms of biological role, catalyzes the reduction of sulfite to sulfide. This is the terminal oxidation reaction in sulfate respiration. The protein is Sulfite reductase, dissimilatory-type subunit alpha (dsrA) of Allochromatium vinosum (strain ATCC 17899 / DSM 180 / NBRC 103801 / NCIMB 10441 / D) (Chromatium vinosum).